The sequence spans 903 residues: Dual serine/threonine and tyrosine protein kinase (903 aa).

Residues 382–414 (ANRKQEEMKEMIVETLESMKEQLLEDAANLEFT) adopt a coiled-coil conformation. Positions 627–881 (PKLGRELGRG…PLLGIVQPSL (255 aa)) constitute a Protein kinase domain. Residues 633–641 (LGRGQYGVV) and Lys-656 each bind ATP. The active-site Proton acceptor is the Asp-752.

It belongs to the protein kinase superfamily. Ser/Thr protein kinase family.

The protein localises to the cytoplasm. It is found in the cell membrane. The protein resides in the apical cell membrane. Its subcellular location is the basolateral cell membrane. It localises to the cell junction. It catalyses the reaction L-seryl-[protein] + ATP = O-phospho-L-seryl-[protein] + ADP + H(+). The enzyme catalyses L-threonyl-[protein] + ATP = O-phospho-L-threonyl-[protein] + ADP + H(+). It carries out the reaction L-tyrosyl-[protein] + ATP = O-phospho-L-tyrosyl-[protein] + ADP + H(+). Its function is as follows. May act as a positive regulator of ERK phosphorylation downstream of fibroblast growth factor-receptor activation. May induce both caspase-dependent apoptosis and caspase-independent cell death. May play a role in the embryonic development. The chain is Dual serine/threonine and tyrosine protein kinase from Pimephales promelas (Fathead minnow).